Here is a 261-residue protein sequence, read N- to C-terminus: Glucanase inhibitor protein 3 (261 aa).

The signal sequence occupies residues 1 to 21; it reads MKVLSSLAAALIALSAVDVEA. The 232-residue stretch at 29-260 folds into the Peptidase S1 domain; the sequence is ILGGGKVPVG…GIEWINSVIK (232 aa). A disulfide bond links Cys56 and Cys72. N-linked (GlcNAc...) asparagine glycosylation occurs at Asn108. Disulfide bonds link Cys183/Cys195 and Cys205/Cys236.

It belongs to the peptidase S1 family.

The protein resides in the secreted. Secreted effector that suppresses host plant glucan elicitor-mediated defense responses. Targets host endoglucanases and inhibits the endoglucanase-mediated release of elicitor-active glucan oligosaccharides from P.sojae cell walls. This Phytophthora sojae (strain P6497) (Soybean stem and root rot agent) protein is Glucanase inhibitor protein 3 (GIP3).